The chain runs to 930 residues: Eisosome protein 1 (930 aa).

Disordered regions lie at residues 1–34 (MSLI…DGKP), 98–143 (TAVS…APKK), 516–544 (DNEI…EEFD), and 637–930 (NNKS…KEVF). 2 stretches are compositionally biased toward low complexity: residues 13–27 (ASST…SSAV) and 98–129 (TAVS…AVKA). Basic and acidic residues-rich tracts occupy residues 523–542 (AAKH…HKEE) and 676–691 (NSDE…KSSE). The segment covering 703-715 (PAKASSPYPAKPS) has biased composition (low complexity). A compositionally biased stretch (basic and acidic residues) spans 721–731 (LPKDFKPEVKP). Composition is skewed to low complexity over residues 740-755 (PQQG…SAKS) and 781-804 (PAAA…KAAA). 2 stretches are compositionally biased toward polar residues: residues 849 to 866 (NATT…NSGI) and 883 to 894 (SGHSNHTRTSVY). Positions 898-908 (DNSDDEDELPD) are enriched in acidic residues. Basic and acidic residues predominate over residues 919-930 (ADKKGSLFKEVF).

Belongs to the EIS1 family.

The protein resides in the cytoplasmic granule. It is found in the cell membrane. Its function is as follows. Required for normal formation of eisosomes, large cytoplasmic protein assemblies that localize to specialized domains on plasma membrane and mark the site of endocytosis. The sequence is that of Eisosome protein 1 (EIS1) from Lachancea thermotolerans (strain ATCC 56472 / CBS 6340 / NRRL Y-8284) (Yeast).